Reading from the N-terminus, the 103-residue chain is uncharacterized protein (103 aa).

The next 3 helical transmembrane spans lie at 1-21, 29-49, and 69-89; these read MPGV…VFLS, IAFI…TGYF, and VVEW…GLLF.

It localises to the cell membrane. This is an uncharacterized protein from Methanocaldococcus jannaschii (strain ATCC 43067 / DSM 2661 / JAL-1 / JCM 10045 / NBRC 100440) (Methanococcus jannaschii).